The following is a 351-amino-acid chain: UDP-N-acetylenolpyruvoylglucosamine reductase (351 aa).

Residues 11–213 (GVGGSIACFI…KQVRDQVLRI (203 aa)) enclose the FAD-binding PCMH-type domain. Arginine 158 is a catalytic residue. Serine 239 functions as the Proton donor in the catalytic mechanism. Glutamate 343 is a catalytic residue.

Belongs to the MurB family. FAD serves as cofactor.

The protein localises to the cytoplasm. It catalyses the reaction UDP-N-acetyl-alpha-D-muramate + NADP(+) = UDP-N-acetyl-3-O-(1-carboxyvinyl)-alpha-D-glucosamine + NADPH + H(+). The protein operates within cell wall biogenesis; peptidoglycan biosynthesis. Cell wall formation. The polypeptide is UDP-N-acetylenolpyruvoylglucosamine reductase (Tropheryma whipplei (strain TW08/27) (Whipple's bacillus)).